The chain runs to 94 residues: Large ribosomal subunit protein bL27 (94 aa).

Residues 1–9 (MLELNLQLF) constitute a propeptide that is removed on maturation. Positions 12-33 (KKGGGSTSNGRDSQAKRLGAKA) are disordered.

The protein belongs to the bacterial ribosomal protein bL27 family. In terms of processing, the N-terminus is cleaved by ribosomal processing cysteine protease Prp.

This is Large ribosomal subunit protein bL27 from Lactococcus lactis subsp. cremoris (strain MG1363).